The sequence spans 271 residues: 3-deoxy-manno-octulosonate cytidylyltransferase (271 aa).

The protein belongs to the KdsB family.

The protein resides in the cytoplasm. It catalyses the reaction 3-deoxy-alpha-D-manno-oct-2-ulosonate + CTP = CMP-3-deoxy-beta-D-manno-octulosonate + diphosphate. The protein operates within nucleotide-sugar biosynthesis; CMP-3-deoxy-D-manno-octulosonate biosynthesis; CMP-3-deoxy-D-manno-octulosonate from 3-deoxy-D-manno-octulosonate and CTP: step 1/1. It participates in bacterial outer membrane biogenesis; lipopolysaccharide biosynthesis. Functionally, activates KDO (a required 8-carbon sugar) for incorporation into bacterial lipopolysaccharide in Gram-negative bacteria. This is 3-deoxy-manno-octulosonate cytidylyltransferase from Leptothrix cholodnii (strain ATCC 51168 / LMG 8142 / SP-6) (Leptothrix discophora (strain SP-6)).